Consider the following 268-residue polypeptide: MNTKEISKVVDLVRESNPLVHNITNVVVTNFTANGLLALGASPVMAYAKEEVAEMTSIAGALVLNMGTLRPDEVEAMLLAGKSANMNDVPVLFDPVGAGATSYRTEVARHIPAEIELAIIRGNAAEIANVINEKWEIKGVDAGAGNGNVVSIAKQAADELNTVAVITGKEDVVTDGERTIVIRNGHSILTKVTGTGCLLTSVIGAFVAVEKDYAKAAVAALTFYGVAAELAAAKTVEKGPGSFQIEFLNQLANTTSSDIEKYGKIEVI.

Methionine 45 contacts substrate. ATP contacts are provided by arginine 121 and threonine 167. Glycine 194 is a binding site for substrate.

The protein belongs to the Thz kinase family. The cofactor is Mg(2+).

It catalyses the reaction 5-(2-hydroxyethyl)-4-methylthiazole + ATP = 4-methyl-5-(2-phosphooxyethyl)-thiazole + ADP + H(+). The protein operates within cofactor biosynthesis; thiamine diphosphate biosynthesis; 4-methyl-5-(2-phosphoethyl)-thiazole from 5-(2-hydroxyethyl)-4-methylthiazole: step 1/1. In terms of biological role, catalyzes the phosphorylation of the hydroxyl group of 4-methyl-5-beta-hydroxyethylthiazole (THZ). The chain is Hydroxyethylthiazole kinase from Bacillus cereus (strain ZK / E33L).